The sequence spans 1652 residues: Venom factor (1652 aa).

The N-terminal stretch at 1–22 (MEGMALYLVAALLIGFPASSFG) is a signal peptide. Mg(2+)-binding residues include Pro-519, Asp-542, Val-543, and Asp-545. 12 disulfides stabilise this stretch: Cys-547–Cys-808, Cys-616–Cys-651, Cys-684–Cys-711, Cys-685–Cys-718, Cys-698–Cys-719, Cys-864–Cys-1502, Cys-1347–Cys-1478, Cys-1378–Cys-1447, Cys-1495–Cys-1500, Cys-1507–Cys-1579, Cys-1526–Cys-1650, and Cys-1626–Cys-1635. The propeptide occupies 657-740 (RRRRRSVVLL…REDELFLARS (84 aa)). A C3a-like domain region spans residues 661 to 739 (RSVVLLDSKA…KREDELFLAR (79 aa)). Residues 684 to 719 (CCEDGMHENPMGYSCEKREKYIQEGDACKAAFLECC) form the Anaphylatoxin-like domain. Residues 743 to 754 (EDEFFGEDNIIS) are factor B binding site. A propeptide spanning residues 992 to 1270 (HLIITPSGCG…VVGFQGLAEY (279 aa)) is cleaved from the precursor. Positions 992 to 1270 (HLIITPSGCG…VVGFQGLAEY (279 aa)) are C3d-like domain. Residues 1000–1003 (CGEQ) constitute a cross-link (isoglutamyl cysteine thioester (Cys-Gln)). The interval 1197-1260 (VLMAASTERN…GGTYGQTQAT (64 aa)) is factor H binding site. The NTR domain maps to 1507 to 1650 (CSLLNQQKKI…LSNTLTIFGC (144 aa)).

It belongs to the venom complement C3 homolog family. In terms of assembly, heterotrimer of alpha, beta and gamma chains; disulfide-linked. Is active with factor B in the presence of factor D. In terms of processing, first processed by the removal of 4 Arg residues by furin-type protease, forming two chains, alpha and gamma/beta precursor, linked by a disulfide bond. Probably, a cobrin-like protease cleaves the C3a-like domain and then the C3d-like domain, generating the mature venom factor (VF). Expressed by the venom gland.

Its subcellular location is the secreted. In terms of biological role, complement-activating protein in venom. It is a structural and functional analog of complement component C3b, the activated form of C3. It binds factor B (CFB), which is subsequently cleaved by factor D (CFD) to form the bimolecular complex VF/Bb. VF/Bb is a C3/C5 convertase that cleaves both complement components C3 and C5. Structurally, it resembles the C3b degradation product C3c, which is not able to form a C3/C5 convertase. Unlike C3b/Bb, VF/Bb is a stable complex and completely resistant to the actions of complement regulatory factors H (CFH) and I (CFI). Therefore, VF continuously activates complement resulting in the depletion of complement activity. The sequence is that of Venom factor from Crotalus adamanteus (Eastern diamondback rattlesnake).